The following is a 260-amino-acid chain: Triosephosphate isomerase (260 aa).

10–12 (NWK) contributes to the substrate binding site. Catalysis depends on His-100, which acts as the Electrophile. The active-site Proton acceptor is the Glu-172. Residues Gly-178, Ser-218, and 239-240 (GG) each bind substrate.

This sequence belongs to the triosephosphate isomerase family. In terms of assembly, homodimer.

The protein localises to the cytoplasm. It carries out the reaction D-glyceraldehyde 3-phosphate = dihydroxyacetone phosphate. It functions in the pathway carbohydrate biosynthesis; gluconeogenesis. The protein operates within carbohydrate degradation; glycolysis; D-glyceraldehyde 3-phosphate from glycerone phosphate: step 1/1. Functionally, involved in the gluconeogenesis. Catalyzes stereospecifically the conversion of dihydroxyacetone phosphate (DHAP) to D-glyceraldehyde-3-phosphate (G3P). This chain is Triosephosphate isomerase, found in Corynebacterium diphtheriae (strain ATCC 700971 / NCTC 13129 / Biotype gravis).